Reading from the N-terminus, the 205-residue chain is dITP/XTP pyrophosphatase (205 aa).

Residue 16–21 participates in substrate binding; the sequence is TGNPGK. E48 and D77 together coordinate Mg(2+). D77 functions as the Proton acceptor in the catalytic mechanism. Substrate is bound by residues S78, 162–165, K185, and 190–191; these read FGYD and HR.

The protein belongs to the HAM1 NTPase family. In terms of assembly, homodimer. It depends on Mg(2+) as a cofactor.

It catalyses the reaction XTP + H2O = XMP + diphosphate + H(+). The catalysed reaction is dITP + H2O = dIMP + diphosphate + H(+). The enzyme catalyses ITP + H2O = IMP + diphosphate + H(+). In terms of biological role, pyrophosphatase that catalyzes the hydrolysis of nucleoside triphosphates to their monophosphate derivatives, with a high preference for the non-canonical purine nucleotides XTP (xanthosine triphosphate), dITP (deoxyinosine triphosphate) and ITP. Seems to function as a house-cleaning enzyme that removes non-canonical purine nucleotides from the nucleotide pool, thus preventing their incorporation into DNA/RNA and avoiding chromosomal lesions. This Erwinia tasmaniensis (strain DSM 17950 / CFBP 7177 / CIP 109463 / NCPPB 4357 / Et1/99) protein is dITP/XTP pyrophosphatase.